We begin with the raw amino-acid sequence, 186 residues long: Peptidyl-tRNA hydrolase (186 aa).

Tyr-14 is a tRNA binding site. His-19 serves as the catalytic Proton acceptor. TRNA is bound by residues Tyr-64, Asn-66, and Asn-112.

Belongs to the PTH family. Monomer.

The protein localises to the cytoplasm. The enzyme catalyses an N-acyl-L-alpha-aminoacyl-tRNA + H2O = an N-acyl-L-amino acid + a tRNA + H(+). Its function is as follows. Hydrolyzes ribosome-free peptidyl-tRNAs (with 1 or more amino acids incorporated), which drop off the ribosome during protein synthesis, or as a result of ribosome stalling. In terms of biological role, catalyzes the release of premature peptidyl moieties from peptidyl-tRNA molecules trapped in stalled 50S ribosomal subunits, and thus maintains levels of free tRNAs and 50S ribosomes. This Bacillus cereus (strain Q1) protein is Peptidyl-tRNA hydrolase.